We begin with the raw amino-acid sequence, 674 residues long: Protein asunder (674 aa).

The stretch at 516 to 538 (HKAKDQYRLLYRELEQLIQLNAS) forms a coiled coil. A disordered region spans residues 560–579 (PSKSEAGTANLRSFTESPLS). Residues 564-577 (EAGTANLRSFTESP) are compositionally biased toward polar residues. The Nuclear localization signal (NLS) motif lies at 601-607 (LKASKRR).

Belongs to the Integrator subunit 13 family. Belongs to the multiprotein complex Integrator, at least composed of IntS1, IntS2, IntS3, IntS4, omd/IntS5, IntS6, defl/IntS7, IntS8, IntS9, IntS10, IntS11, IntS12, asun/IntS13, IntS14 and IntS15. The core complex associates with protein phosphatase 2A subunits mts/PP2A and Pp2A-29B, to form the Integrator-PP2A (INTAC) complex. In terms of processing, phosphorylated.

The protein localises to the nucleus. It localises to the cytoplasm. Its subcellular location is the perinuclear region. Functionally, component of the integrator complex, a multiprotein complex that terminates RNA polymerase II (Pol II) transcription in the promoter-proximal region of genes. The integrator complex provides a quality checkpoint during transcription elongation by driving premature transcription termination of transcripts that are unfavorably configured for transcriptional elongation: the complex terminates transcription by (1) catalyzing dephosphorylation of the C-terminal domain (CTD) of Pol II subunit Polr2A/Rbp1 and Spt5, and (2) degrading the exiting nascent RNA transcript via endonuclease activity. The integrator complex is also involved in the 3'-end processing of the U7 snRNA, and also the spliceosomal snRNAs U1, U2, U4 and U5. The protein is Protein asunder (asun) of Drosophila pseudoobscura pseudoobscura (Fruit fly).